Consider the following 307-residue polypeptide: 3-methyl-2-oxobutanoate hydroxymethyltransferase (307 aa).

D61 and D100 together coordinate Mg(2+). Residues 61 to 62, D100, and K130 each bind 3-methyl-2-oxobutanoate; that span reads DS. E132 serves as a coordination point for Mg(2+). The active-site Proton acceptor is E199.

The protein belongs to the PanB family. Homodecamer; pentamer of dimers. It depends on Mg(2+) as a cofactor.

The protein resides in the cytoplasm. It carries out the reaction 3-methyl-2-oxobutanoate + (6R)-5,10-methylene-5,6,7,8-tetrahydrofolate + H2O = 2-dehydropantoate + (6S)-5,6,7,8-tetrahydrofolate. Its pathway is cofactor biosynthesis; (R)-pantothenate biosynthesis; (R)-pantoate from 3-methyl-2-oxobutanoate: step 1/2. Functionally, catalyzes the reversible reaction in which hydroxymethyl group from 5,10-methylenetetrahydrofolate is transferred onto alpha-ketoisovalerate to form ketopantoate. This is 3-methyl-2-oxobutanoate hydroxymethyltransferase from Nitratidesulfovibrio vulgaris (strain ATCC 29579 / DSM 644 / CCUG 34227 / NCIMB 8303 / VKM B-1760 / Hildenborough) (Desulfovibrio vulgaris).